A 275-amino-acid chain; its full sequence is 3-methyl-2-oxobutanoate hydroxymethyltransferase (275 aa).

Positions 44 and 83 each coordinate Mg(2+). Residues 44–45 (DS), D83, and K113 each bind 3-methyl-2-oxobutanoate. Mg(2+) is bound at residue E115. E182 acts as the Proton acceptor in catalysis.

The protein belongs to the PanB family. Homodecamer; pentamer of dimers. The cofactor is Mg(2+).

The protein localises to the cytoplasm. The catalysed reaction is 3-methyl-2-oxobutanoate + (6R)-5,10-methylene-5,6,7,8-tetrahydrofolate + H2O = 2-dehydropantoate + (6S)-5,6,7,8-tetrahydrofolate. It participates in cofactor biosynthesis; (R)-pantothenate biosynthesis; (R)-pantoate from 3-methyl-2-oxobutanoate: step 1/2. Catalyzes the reversible reaction in which hydroxymethyl group from 5,10-methylenetetrahydrofolate is transferred onto alpha-ketoisovalerate to form ketopantoate. The sequence is that of 3-methyl-2-oxobutanoate hydroxymethyltransferase from Clostridium novyi (strain NT).